A 285-amino-acid chain; its full sequence is 2-dehydro-3-deoxyphosphooctonate aldolase (285 aa).

This sequence belongs to the KdsA family.

It is found in the cytoplasm. It carries out the reaction D-arabinose 5-phosphate + phosphoenolpyruvate + H2O = 3-deoxy-alpha-D-manno-2-octulosonate-8-phosphate + phosphate. It participates in carbohydrate biosynthesis; 3-deoxy-D-manno-octulosonate biosynthesis; 3-deoxy-D-manno-octulosonate from D-ribulose 5-phosphate: step 2/3. Its pathway is bacterial outer membrane biogenesis; lipopolysaccharide biosynthesis. The polypeptide is 2-dehydro-3-deoxyphosphooctonate aldolase (Paracidovorax citrulli (strain AAC00-1) (Acidovorax citrulli)).